We begin with the raw amino-acid sequence, 162 residues long: TSIFETAGVGQPAYATIGAGVVNTVFTLVSVFLVERAGRRTLHLLGLAGMCGCAILMTIALLLLERLPAMSYVSIVAIFGFVAFFEIGPGPIPWFIVAELFSQGPRPAAMAVAGFCNWTSNFIIGMGFQYIAXAMGPYVFLLFAVLLLAFFIFTFLKVPETR.

Topologically, residues 1–13 (TSIFETAGVGQPA) are extracellular. The chain crosses the membrane as a helical span at residues 14–34 (YATIGAGVVNTVFTLVSVFLV). Residue N23 coordinates D-glucose. Residues 35 to 43 (ERAGRRTLH) lie on the Cytoplasmic side of the membrane. Residues 44 to 64 (LLGLAGMCGCAILMTIALLLL) traverse the membrane as a helical segment. The Extracellular portion of the chain corresponds to 65-75 (ERLPAMSYVSI). A helical membrane pass occupies residues 76–96 (VAIFGFVAFFEIGPGPIPWFI). The D-glucose site is built by E86 and W94. The Cytoplasmic portion of the chain corresponds to 97–107 (VAELFSQGPRP). A helical membrane pass occupies residues 108 to 128 (AAMAVAGFCNWTSNFIIGMGF). Over 129–135 (QYIAXAM) the chain is Extracellular. The chain crosses the membrane as a helical span at residues 136-156 (GPYVFLLFAVLLLAFFIFTFL). Residues 157–162 (KVPETR) are Cytoplasmic-facing.

Belongs to the major facilitator superfamily. Sugar transporter (TC 2.A.1.1) family. Glucose transporter subfamily. In terms of assembly, binds to DAXX. Interacts via its N-terminus with SRFBP1. Interacts with NDUFA9. Interacts with TRARG1; the interaction is required for proper SLC2A4 recycling after insulin stimulation. Sumoylated. In terms of processing, palmitoylated. Palmitoylation by ZDHHC7 controls the insulin-dependent translocation of GLUT4 to the plasma membrane.

It is found in the cell membrane. Its subcellular location is the endomembrane system. The protein resides in the cytoplasm. The protein localises to the perinuclear region. The enzyme catalyses D-glucose(out) = D-glucose(in). In terms of biological role, insulin-regulated facilitative glucose transporter, which plays a key role in removal of glucose from circulation. Response to insulin is regulated by its intracellular localization: in the absence of insulin, it is efficiently retained intracellularly within storage compartments in muscle and fat cells. Upon insulin stimulation, translocates from these compartments to the cell surface where it transports glucose from the extracellular milieu into the cell. This Canis lupus familiaris (Dog) protein is Solute carrier family 2, facilitated glucose transporter member 4.